The chain runs to 225 residues: Small ribosomal subunit protein eS1 (225 aa).

It belongs to the eukaryotic ribosomal protein eS1 family.

The sequence is that of Small ribosomal subunit protein eS1 from Methanococcus maripaludis (strain DSM 14266 / JCM 13030 / NBRC 101832 / S2 / LL).